A 397-amino-acid polypeptide reads, in one-letter code: 2,3,4,5-tetrahydropyridine-2,6-dicarboxylate N-succinyltransferase (397 aa).

Catalysis depends on Glu265, which acts as the Acyl-anhydride intermediate. Succinyl-CoA is bound by residues Arg267, Gly282, Ser285, Ala308, 323–324 (DA), Gly331, Lys360, and 373–376 (RQNS).

Belongs to the type 2 tetrahydrodipicolinate N-succinyltransferase family. Homotrimer.

It is found in the cytoplasm. It carries out the reaction (S)-2,3,4,5-tetrahydrodipicolinate + succinyl-CoA + H2O = (S)-2-succinylamino-6-oxoheptanedioate + CoA. It functions in the pathway amino-acid biosynthesis; L-lysine biosynthesis via DAP pathway; LL-2,6-diaminopimelate from (S)-tetrahydrodipicolinate (succinylase route): step 1/3. Functionally, catalyzes the conversion of the cyclic tetrahydrodipicolinate (THDP) into the acyclic N-succinyl-L-2-amino-6-oxopimelate using succinyl-CoA. This chain is 2,3,4,5-tetrahydropyridine-2,6-dicarboxylate N-succinyltransferase, found in Sulfurovum sp. (strain NBC37-1).